A 199-amino-acid polypeptide reads, in one-letter code: Pyridoxal 5'-phosphate synthase subunit PdxT (199 aa).

Gly-52–Ser-54 is a binding site for L-glutamine. The Nucleophile role is filled by Cys-84. Residues Arg-115 and Ile-143 to Arg-144 contribute to the L-glutamine site. Catalysis depends on charge relay system residues His-179 and Glu-181.

The protein belongs to the glutaminase PdxT/SNO family. In the presence of PdxS, forms a dodecamer of heterodimers. Only shows activity in the heterodimer.

The catalysed reaction is aldehydo-D-ribose 5-phosphate + D-glyceraldehyde 3-phosphate + L-glutamine = pyridoxal 5'-phosphate + L-glutamate + phosphate + 3 H2O + H(+). The enzyme catalyses L-glutamine + H2O = L-glutamate + NH4(+). Its pathway is cofactor biosynthesis; pyridoxal 5'-phosphate biosynthesis. Its function is as follows. Catalyzes the hydrolysis of glutamine to glutamate and ammonia as part of the biosynthesis of pyridoxal 5'-phosphate. The resulting ammonia molecule is channeled to the active site of PdxS. This is Pyridoxal 5'-phosphate synthase subunit PdxT from Methanosarcina acetivorans (strain ATCC 35395 / DSM 2834 / JCM 12185 / C2A).